The following is a 624-amino-acid chain: Aliphatic sulfonate oxidoreductase, WOR-like subunit (624 aa).

Lysine 77, serine 93, valine 94, serine 96, histidine 195, alanine 196, glycine 198, and tyrosine 199 together coordinate tungstopterin. Residues aspartate 299, cysteine 302, and cysteine 306 each coordinate [4Fe-4S] cluster. Residues aspartate 353, leucine 357, aspartate 358, glycine 359, threonine 470, aspartate 490, isoleucine 494, cysteine 495, and asparagine 496 each coordinate tungstopterin. Residue cysteine 495 coordinates [4Fe-4S] cluster. The interval 552 to 575 is disordered; the sequence is KDDDNPPRFYEPLPSGPVKGKAPN.

This sequence belongs to the AOR/FOR family. As to quaternary structure, heterodimer composed of a small WOR5-S subunit, with four [4Fe-4S] clusters, and a large WOR5-L subunit, containing the active site tungsto-bispyranopterin cofactor as well as another [4Fe-4S] cluster. It depends on [4Fe-4S] cluster as a cofactor. Tungstopterin serves as cofactor.

Its subcellular location is the cytoplasm. The enzyme catalyses an aliphatic sulfonate + 4 oxidized [4Fe-4S]-[ferredoxin] + 2 H2O = 4 reduced [4Fe-4S]-[ferredoxin] + a carboxylate + sulfite + 6 H(+). It catalyses the reaction an aliphatic sulfonate + 2 oxidized [4Fe-4S]-[ferredoxin] + H2O = 2 reduced [4Fe-4S]-[ferredoxin] + an aldehyde + sulfite + 3 H(+). It carries out the reaction 2 oxidized [4Fe-4S]-[ferredoxin] + an aldehyde + H2O = 2 reduced [4Fe-4S]-[ferredoxin] + a carboxylate + 3 H(+). The catalysed reaction is 4 oxidized [4Fe-4S]-[ferredoxin] + taurine + 2 H2O = 4 reduced [4Fe-4S]-[ferredoxin] + sulfite + glycine + 6 H(+). The enzyme catalyses 2 oxidized [4Fe-4S]-[ferredoxin] + taurine + H2O = aminoacetaldehyde + 2 reduced [4Fe-4S]-[ferredoxin] + sulfite + 3 H(+). It catalyses the reaction aminoacetaldehyde + 2 oxidized [4Fe-4S]-[ferredoxin] + H2O = 2 reduced [4Fe-4S]-[ferredoxin] + glycine + 3 H(+). WOR-like catalytic subunit of an oxidoreductase that can desulfonate and oxidize aliphatic sulfonates such as taurine. The activity involves two steps: an oxidative desulfonation reaction, followed by the activation of a second water molecule and oxidation of the resulting aldehyde. May be involved in the oxidation of various aliphatic sulfonates and also phosphonates. In vitro, has a broad substrate specificity with a high affinity for several substituted and nonsubstituted aliphatic and aromatic aldehydes with various chain lengths, with methyl viologen or benzyl viologen as electron acceptor. Ferredoxin is the physiological electron acceptor. In Pyrococcus furiosus (strain ATCC 43587 / DSM 3638 / JCM 8422 / Vc1), this protein is Aliphatic sulfonate oxidoreductase, WOR-like subunit.